Reading from the N-terminus, the 931-residue chain is Dual serine/threonine and tyrosine protein kinase (931 aa).

A disordered region spans residues 1 to 24 (MEGDAPQRVSERVSGPGPGGGGGG). Residues 397–424 (RKKENELYESLMNIANRKQEEMKDMICE) are a coiled coil. A Protein kinase domain is found at 654–908 (PKLGQELGRG…PLLGIVQPML (255 aa)). ATP is bound by residues 660–668 (LGRGQYGVV) and lysine 683. Aspartate 779 functions as the Proton acceptor in the catalytic mechanism.

This sequence belongs to the protein kinase superfamily. Ser/Thr protein kinase family.

The protein resides in the cytoplasm. It is found in the cell membrane. Its subcellular location is the apical cell membrane. It localises to the basolateral cell membrane. The protein localises to the cell junction. It carries out the reaction L-seryl-[protein] + ATP = O-phospho-L-seryl-[protein] + ADP + H(+). The catalysed reaction is L-threonyl-[protein] + ATP = O-phospho-L-threonyl-[protein] + ADP + H(+). It catalyses the reaction L-tyrosyl-[protein] + ATP = O-phospho-L-tyrosyl-[protein] + ADP + H(+). Functionally, acts as a positive regulator of ERK phosphorylation downstream of fibroblast growth factor-receptor activation. Involved in the regulation of both caspase-dependent apoptosis and caspase-independent cell death. In the skin, it plays a predominant role in suppressing caspase-dependent apoptosis in response to UV stress in a range of dermal cell types. The polypeptide is Dual serine/threonine and tyrosine protein kinase (DSTYK) (Canis lupus familiaris (Dog)).